We begin with the raw amino-acid sequence, 103 residues long: Iron-sulfur cluster assembly protein CyaY (103 aa).

This sequence belongs to the frataxin family.

Its function is as follows. Involved in iron-sulfur (Fe-S) cluster assembly. May act as a regulator of Fe-S biogenesis. The sequence is that of Iron-sulfur cluster assembly protein CyaY from Rickettsia peacockii (strain Rustic).